A 137-amino-acid polypeptide reads, in one-letter code: Small heat shock protein IbpA (137 aa).

A sHSP domain is found at 28-137; it reads SQSNGGYPPY…ANKPRRIEIN (110 aa).

Belongs to the small heat shock protein (HSP20) family. As to quaternary structure, monomer. Forms homomultimers of about 100-150 subunits at optimal growth temperatures. Conformation changes to monomers at high temperatures or high ionic concentrations.

The protein localises to the cytoplasm. Its function is as follows. Associates with aggregated proteins, together with IbpB, to stabilize and protect them from irreversible denaturation and extensive proteolysis during heat shock and oxidative stress. Aggregated proteins bound to the IbpAB complex are more efficiently refolded and reactivated by the ATP-dependent chaperone systems ClpB and DnaK/DnaJ/GrpE. Its activity is ATP-independent. The sequence is that of Small heat shock protein IbpA from Klebsiella pneumoniae (strain 342).